The following is a 291-amino-acid chain: Lipoyl synthase (291 aa).

Residues cysteine 35, cysteine 40, cysteine 46, cysteine 61, cysteine 65, cysteine 68, and serine 273 each coordinate [4Fe-4S] cluster. A Radical SAM core domain is found at 47–262; the sequence is FGKRQATFLI…KEKALAMGFE (216 aa).

This sequence belongs to the radical SAM superfamily. Lipoyl synthase family. The cofactor is [4Fe-4S] cluster.

It is found in the cytoplasm. It carries out the reaction [[Fe-S] cluster scaffold protein carrying a second [4Fe-4S](2+) cluster] + N(6)-octanoyl-L-lysyl-[protein] + 2 oxidized [2Fe-2S]-[ferredoxin] + 2 S-adenosyl-L-methionine + 4 H(+) = [[Fe-S] cluster scaffold protein] + N(6)-[(R)-dihydrolipoyl]-L-lysyl-[protein] + 4 Fe(3+) + 2 hydrogen sulfide + 2 5'-deoxyadenosine + 2 L-methionine + 2 reduced [2Fe-2S]-[ferredoxin]. It functions in the pathway protein modification; protein lipoylation via endogenous pathway; protein N(6)-(lipoyl)lysine from octanoyl-[acyl-carrier-protein]: step 2/2. Its function is as follows. Catalyzes the radical-mediated insertion of two sulfur atoms into the C-6 and C-8 positions of the octanoyl moiety bound to the lipoyl domains of lipoate-dependent enzymes, thereby converting the octanoylated domains into lipoylated derivatives. In Geobacter sp. (strain M21), this protein is Lipoyl synthase.